Reading from the N-terminus, the 211-residue chain is MASRLLARSKALALALSRADAAAPGPAAGVQWLRTLSSLPRDPAAAASPAPAPRQPAVGSPLGLSKIPGYEQTSRLSGTQVLPRWFSTGTSNGSSAQQEGATRKVMAFSPLEASIAKPRKGPLTSESWKVKQTELLTRSTYYMIPTLLLVSKNSISTSLLVASVFHQVYMFYKEILLDYVHHDITRKWVFIYFKILLIIMAKETVVYFDLF.

A mitochondrion-targeting transit peptide spans 1–36; the sequence is MASRLLARSKALALALSRADAAAPGPAAGVQWLRTL. The interval 41–64 is disordered; that stretch reads RDPAAAASPAPAPRQPAVGSPLGL. His-166 contributes to the heme binding site. A ubiquinone is bound at residue Tyr-179. Residues 188-210 traverse the membrane as a helical segment; it reads WVFIYFKILLIIMAKETVVYFDL.

As to quaternary structure, component of complex II composed of eight subunits in plants: four classical SDH subunits SDH1, SDH2, SDH3 and SDH4 (a flavoprotein (FP), an iron-sulfur protein (IP), and a cytochrome b composed of a large and a small subunit.), as well as four subunits unknown in mitochondria from bacteria and heterotrophic eukaryotes. Heme serves as cofactor.

The protein resides in the mitochondrion inner membrane. It functions in the pathway carbohydrate metabolism; tricarboxylic acid cycle. Its function is as follows. Membrane-anchoring subunit of succinate dehydrogenase (SDH). This chain is Succinate dehydrogenase subunit 4, mitochondrial, found in Oryza sativa subsp. japonica (Rice).